Consider the following 237-residue polypeptide: 1-(5-phosphoribosyl)-5-[(5-phosphoribosylamino)methylideneamino] imidazole-4-carboxamide isomerase (237 aa).

D8 (proton acceptor) is an active-site residue. D130 serves as the catalytic Proton donor.

Belongs to the HisA/HisF family.

It localises to the cytoplasm. It catalyses the reaction 1-(5-phospho-beta-D-ribosyl)-5-[(5-phospho-beta-D-ribosylamino)methylideneamino]imidazole-4-carboxamide = 5-[(5-phospho-1-deoxy-D-ribulos-1-ylimino)methylamino]-1-(5-phospho-beta-D-ribosyl)imidazole-4-carboxamide. The protein operates within amino-acid biosynthesis; L-histidine biosynthesis; L-histidine from 5-phospho-alpha-D-ribose 1-diphosphate: step 4/9. This Caldicellulosiruptor bescii (strain ATCC BAA-1888 / DSM 6725 / KCTC 15123 / Z-1320) (Anaerocellum thermophilum) protein is 1-(5-phosphoribosyl)-5-[(5-phosphoribosylamino)methylideneamino] imidazole-4-carboxamide isomerase.